The following is a 523-amino-acid chain: ADP-ribosylation factor GTPase-activating protein 3 (523 aa).

In terms of domain architecture, Arf-GAP spans leucine 10–arginine 126. The C4-type zinc finger occupies cysteine 25–cysteine 48. Residues glycine 162–alanine 206 are disordered. A compositionally biased stretch (polar residues) spans methionine 164–proline 177. A phosphoserine mark is found at serine 231 and serine 241. Residues glutamine 248–glutamate 269 are disordered. Serine 270, serine 274, and serine 331 each carry phosphoserine. The disordered stretch occupies residues glycine 308–alanine 424. Residues serine 314–proline 332 are compositionally biased toward polar residues. The segment covering serine 348–serine 361 has biased composition (low complexity). Serine 377 carries the phosphoserine modification. The span at tyrosine 385–proline 396 shows a compositional bias: basic and acidic residues. Residues serine 435, serine 458, serine 460, serine 462, serine 464, and serine 465 each carry the phosphoserine modification.

It is found in the cytoplasm. The protein resides in the golgi apparatus membrane. With respect to regulation, GAP activity stimulated by phosphatidylinositol 4,5-bisphosphate (PIP2). Functionally, GTPase-activating protein (GAP) for ADP ribosylation factor 1 (ARF1). Hydrolysis of ARF1-bound GTP may lead to dissociation of coatomer from Golgi-derived membranes to allow fusion with target membranes. The polypeptide is ADP-ribosylation factor GTPase-activating protein 3 (Arfgap3) (Mus musculus (Mouse)).